A 435-amino-acid polypeptide reads, in one-letter code: Glutamyl-tRNA reductase (435 aa).

Residues 49–52 (TCNR), serine 118, 123–125 (EPQ), and glutamine 129 contribute to the substrate site. Residue cysteine 50 is the Nucleophile of the active site. 203–208 (GAGETI) is a binding site for NADP(+).

This sequence belongs to the glutamyl-tRNA reductase family. Homodimer.

The catalysed reaction is (S)-4-amino-5-oxopentanoate + tRNA(Glu) + NADP(+) = L-glutamyl-tRNA(Glu) + NADPH + H(+). The protein operates within porphyrin-containing compound metabolism; protoporphyrin-IX biosynthesis; 5-aminolevulinate from L-glutamyl-tRNA(Glu): step 1/2. In terms of biological role, catalyzes the NADPH-dependent reduction of glutamyl-tRNA(Glu) to glutamate 1-semialdehyde (GSA). The chain is Glutamyl-tRNA reductase from Glaesserella parasuis serovar 5 (strain SH0165) (Haemophilus parasuis).